The chain runs to 366 residues: uncharacterized protein (366 aa).

The 226-residue stretch at 63–288 (ARVAMVGFPS…LLEKMWEYLA (226 aa)) folds into the OBG-type G domain. GTP-binding positions include 69-76 (GFPSVGKS), 115-119 (DLPGI), and 246-249 (NKVD). One can recognise a TGS domain in the interval 288–365 (ALVRVYTKKP…DHEDVIQIVK (78 aa)).

Belongs to the TRAFAC class OBG-HflX-like GTPase superfamily. OBG GTPase family.

This is an uncharacterized protein from Caenorhabditis elegans.